We begin with the raw amino-acid sequence, 65 residues long: UPF0434 protein BRADO0313 (65 aa).

Belongs to the UPF0434 family.

This Bradyrhizobium sp. (strain ORS 278) protein is UPF0434 protein BRADO0313.